The sequence spans 322 residues: Beta-1,3-galactosyltransferase bre-5 (322 aa).

The Cytoplasmic segment spans residues 1–16 (MFLCVRILKRKYHELS). Residues 17–37 (SFQKLLIFTITIFLLWVLGVV) form a helical; Signal-anchor for type II membrane protein membrane-spanning segment. Topologically, residues 38–322 (DKFRETSFGD…YEYSQLNGFE (285 aa)) are lumenal. Residue Asn150 is glycosylated (N-linked (GlcNAc...) asparagine).

It belongs to the glycosyltransferase 31 family. As to expression, expressed in the gut.

It localises to the golgi apparatus membrane. The protein operates within protein modification; protein glycosylation. Functionally, transfers N-acetylgalactosamine onto mannose groups of carbohydrate substrates. Required for susceptibility to pore-forming crystal toxins in conjunction with bre-1, bre-2, bre-3, and bre-4. Involved in resistance to the nematotoxic C.cinerea galectin Cgl2. In Caenorhabditis elegans, this protein is Beta-1,3-galactosyltransferase bre-5.